The chain runs to 161 residues: MKKKYYISISLLMTIIVLVFDQVSKWLITISMKVGDSYEIIPNFLNITSHRNNGAAWGILSGKMLFFYIITIIILIVLVIFYIKEAQFNLFMQVAISLLFAGALGNFIDRVLHGEVVDFIDTNIFGYDFPIFNIADSSLTIGVIFVIIALIKDAIINKKEV.

A run of 3 helical transmembrane segments spans residues 9–29, 63–83, and 88–108; these read ISLLMTIIVLVFDQVSKWLIT, KMLFFYIITIIILIVLVIFYI, and FNLFMQVAISLLFAGALGNFI. Catalysis depends on residues aspartate 118 and aspartate 136. The chain crosses the membrane as a helical span at residues 131 to 151; sequence IFNIADSSLTIGVIFVIIALI.

Belongs to the peptidase A8 family.

The protein localises to the cell membrane. The catalysed reaction is Release of signal peptides from bacterial membrane prolipoproteins. Hydrolyzes -Xaa-Yaa-Zaa-|-(S,diacylglyceryl)Cys-, in which Xaa is hydrophobic (preferably Leu), and Yaa (Ala or Ser) and Zaa (Gly or Ala) have small, neutral side chains.. It functions in the pathway protein modification; lipoprotein biosynthesis (signal peptide cleavage). Its function is as follows. This protein specifically catalyzes the removal of signal peptides from prolipoproteins. The sequence is that of Lipoprotein signal peptidase from Staphylococcus epidermidis (strain ATCC 12228 / FDA PCI 1200).